The chain runs to 134 residues: TSC22 domain family protein 3 (134 aa).

The interval 1–60 (MNTEMYQTPMEVAVYQLHNFSISFFSSLLGGDVVSVKLDNSASGASVVALDNKIEQAMDL) is AP1-binding. The leucine-zipper stretch occupies residues 76-97 (LKEQIRELVEKNSQLERENTLL). Residues 101 to 134 (ASPEQLEKFQSRLSPEEPAPEAPETPEAPGGSAV) are disordered. Position 102 is a phosphoserine (serine 102). A Phosphothreonine modification is found at threonine 125. Residues 125-134 (TPEAPGGSAV) show a composition bias toward low complexity.

Belongs to the TSC-22/Dip/Bun family. As to quaternary structure, can form homodimers, however it is likely to function as a monomer. Interacts with NFKB1. Interacts (via N-terminus) with JUN and FOS; these interactions inhibit the binding of active AP1 to its target DNA. Interacts with MYOD1. Interacts with HDAC1; this interaction affects HDAC1 activity on MYOG promoter and thus inhibits MYOD1 transcriptional activity.

It is found in the cytoplasm. Its subcellular location is the nucleus. Functionally, protects T-cells from IL2 deprivation-induced apoptosis through the inhibition of FOXO3A transcriptional activity that leads to the down-regulation of the pro-apoptotic factor BCL2L11. In macrophages, plays a role in the anti-inflammatory and immunosuppressive effects of glucocorticoids and IL10. In T-cells, inhibits anti-CD3-induced NFKB1 nuclear translocation and thereby NFKB1 DNA-binding activities. In vitro, suppresses AP-1 transcription factor complex DNA-binding activities. In Rattus norvegicus (Rat), this protein is TSC22 domain family protein 3 (Tsc22d3).